A 489-amino-acid chain; its full sequence is Cryptochrome DASH (489 aa).

Residues Pro-6 to Leu-140 enclose the Photolyase/cryptochrome alpha/beta domain.

It belongs to the DNA photolyase class-1 family. It depends on FAD as a cofactor. (6R)-5,10-methylene-5,6,7,8-tetrahydrofolate is required as a cofactor.

In terms of biological role, may have a photoreceptor function. Binds DNA; represses transcription of at least 8 genes, including slr0364 and slr1866. Does not encode a DNA photolyase function. Its disruption does not affect circadian rhythm. This is Cryptochrome DASH (cry) from Synechocystis sp. (strain ATCC 27184 / PCC 6803 / Kazusa).